The chain runs to 636 residues: Chaperone protein DnaK (636 aa).

A disordered region spans residues 579–636 (ELYKNAAPPPGADGQQGADGQQGADGQQGADGQQGADGQQGADGQTTESSSNDETKTN). Low complexity predominate over residues 590–623 (ADGQQGADGQQGADGQQGADGQQGADGQQGADGQ).

It belongs to the heat shock protein 70 family.

Functionally, acts as a chaperone. The chain is Chaperone protein DnaK from Nitrosopumilus maritimus (strain SCM1).